The sequence spans 404 residues: AT-hook motif nuclear-localized protein 6 (404 aa).

A disordered region spans residues 40-112; the sequence is TTVVTPLPPP…TPISSSIPLS (73 aa). Residues 45-55 are compositionally biased toward pro residues; it reads PLPPPPAPSSA. Residues 56-70 are compositionally biased toward low complexity; the sequence is PVPTTVTPGSATAST. Positions 76–84 match the Bipartite nuclear localization signal motif; the sequence is KKKRGRPRK. The a.T hook DNA-binding region spans 76–88; that stretch reads KKKRGRPRKYAPD. Residues 98 to 112 are compositionally biased toward low complexity; the sequence is PTLSPTPISSSIPLS. Residues 157-299 enclose the PPC domain; it reads GANFTTHQFT…RVMEAFAPPQ (143 aa). Positions 365-404 are disordered; it reads AYHGYGNMNTGTTHKEEHEDEDGGDDDDDSGDTRSQSHSG. Over residues 382-394 the composition is skewed to acidic residues; the sequence is HEDEDGGDDDDDS.

Its subcellular location is the nucleus. In terms of biological role, transcription factor that specifically binds AT-rich DNA sequences related to the nuclear matrix attachment regions (MARs). This is AT-hook motif nuclear-localized protein 6 from Arabidopsis thaliana (Mouse-ear cress).